Here is a 312-residue protein sequence, read N- to C-terminus: Olfactory receptor-like protein COR4 (312 aa).

Residues 1-26 (MASGNCTTPTTFILSGLTDNPGLQMP) are Extracellular-facing. N5 carries an N-linked (GlcNAc...) asparagine glycan. The chain crosses the membrane as a helical span at residues 27 to 49 (LFMVFLAIYTITLLTNLGLIALI). At 50–57 (SVDLHLQT) the chain is on the cytoplasmic side. A helical transmembrane segment spans residues 58 to 79 (PMYIFLQNLSFTDAAYSTVITP). The Extracellular portion of the chain corresponds to 80 to 100 (KMLATFLEERKTISYIGCILQ). C97 and C179 are disulfide-bonded. A helical transmembrane segment spans residues 101–120 (YFSFVLLTVTESLLLAVMAY). The Cytoplasmic segment spans residues 121 to 139 (DRYVAICKPLLYPSIMTKA). A helical membrane pass occupies residues 140-164 (VCWRLVKGLYSLAFLNSLVHTSGLL). The Extracellular segment spans residues 165–205 (KLSFCSSNVVNHFFCDNSPLFQISSSSTTLNELLVFIFGSL). Residues 206–226 (FAMSSIITILISYVFIILTVV) form a helical membrane-spanning segment. Topologically, residues 227 to 239 (RIRSKDGKYKAFS) are cytoplasmic. The helical transmembrane segment at 240–260 (TCTSHLMAVSLFHGTVIFMYL) threads the bilayer. At 261-271 (RPVKLFSLDTD) the chain is on the extracellular side. The helical transmembrane segment at 272 to 292 (KIASLFYTVVIPMLNPLIYSW) threads the bilayer. At 293 to 312 (RNKEVKDALRRVIATNVWIH) the chain is on the cytoplasmic side.

The protein belongs to the G-protein coupled receptor 1 family.

The protein localises to the cell membrane. In terms of biological role, odorant receptor. This chain is Olfactory receptor-like protein COR4 (COR4), found in Gallus gallus (Chicken).